The chain runs to 235 residues: MTFRATVLTLYPEMFPGPLDISLAGRARSAGTWSLETVQIRDFATDKHRSVDDTPAGGGAGMVMRADVLARAIDHASPEEDARPRLLMSPRGKPLTQSFVRELATGPGAVIVCGRFEGVDQRVIEARCLLEVSVGDYILSGGEPAAIVLLDAVVRLLPGVMGNESSGAEESFESGLLEHPQYTRPQTFEGREIPEVLTSGNHRKIAEWRSAEAEQLTRERRPDLWLGYHRAKGGT.

S-adenosyl-L-methionine-binding positions include G114 and 134-139 (VGDYIL).

It belongs to the RNA methyltransferase TrmD family. In terms of assembly, homodimer.

It localises to the cytoplasm. It catalyses the reaction guanosine(37) in tRNA + S-adenosyl-L-methionine = N(1)-methylguanosine(37) in tRNA + S-adenosyl-L-homocysteine + H(+). Functionally, specifically methylates guanosine-37 in various tRNAs. This chain is tRNA (guanine-N(1)-)-methyltransferase, found in Chelativorans sp. (strain BNC1).